We begin with the raw amino-acid sequence, 204 residues long: Guanylate kinase (204 aa).

One can recognise a Guanylate kinase-like domain in the interval 3–181 (GTLIIITAPS…ALDDLVAVVR (179 aa)). 10–17 (APSGAGKT) contributes to the ATP binding site.

Belongs to the guanylate kinase family.

The protein localises to the cytoplasm. It carries out the reaction GMP + ATP = GDP + ADP. In terms of biological role, essential for recycling GMP and indirectly, cGMP. The chain is Guanylate kinase from Aromatoleum aromaticum (strain DSM 19018 / LMG 30748 / EbN1) (Azoarcus sp. (strain EbN1)).